A 664-amino-acid chain; its full sequence is DNA mismatch repair protein MutL (664 aa).

Residues 382–447 (RKAGQEQQLQ…YGEPAPSKQQ (66 aa)) form a disordered region. Residues 427-436 (RHTTSSNQSE) show a composition bias toward polar residues.

It belongs to the DNA mismatch repair MutL/HexB family.

Its function is as follows. This protein is involved in the repair of mismatches in DNA. It is required for dam-dependent methyl-directed DNA mismatch repair. May act as a 'molecular matchmaker', a protein that promotes the formation of a stable complex between two or more DNA-binding proteins in an ATP-dependent manner without itself being part of a final effector complex. The polypeptide is DNA mismatch repair protein MutL (Vibrio vulnificus (strain YJ016)).